A 418-amino-acid chain; its full sequence is Beta-arrestin-1 (418 aa).

An interaction with SRC region spans residues 1-163 (MGDKGTRVFK…LEEKIHKRNS (163 aa)). Residues 45–86 (PEYLKERRVYVTLTCAFRYGREDLDVLGLTFRKDLFVANVQS) form an interaction with CHRM2 region. Residue Tyr47 is modified to Phosphotyrosine. Lys250, Met255, Lys324, and Lys326 together coordinate 1D-myo-inositol hexakisphosphate. An interaction with TRAF6 region spans residues 318 to 418 (IVSYKVKVKL…GTGSPQLNNR (101 aa)). The disordered stretch occupies residues 353–375 (HPKPKEEPPHREVPENETPVDTN). Over residues 355 to 366 (KPKEEPPHREVP) the composition is skewed to basic and acidic residues. The [DE]-X(1,2)-F-X-X-[FL]-X-X-X-R motif signature appears at 385–395 (DIVFEDFARQR). The segment at 397-418 (KGMKDDKEEEEDGTGSPQLNNR) is disordered. Ser412 carries the post-translational modification Phosphoserine; by GRK5.

It belongs to the arrestin family. As to quaternary structure, monomer. Homodimer. Homooligomer; the self-association is mediated by InsP6-binding. Heterooligomer with ARRB2; the association is mediated by InsP6-binding. Interacts with GPR143. Interacts with ADRB2 (phosphorylated). Interacts with CHRM2 (phosphorylated). Interacts with LHCGR. Interacts with CYTH2 and CASR. Interacts with AP2B1 (dephosphorylated at 'Tyr-737'); phosphorylation of AP2B1 at 'Tyr-737' disrupts the interaction. Interacts (dephosphorylated at Ser-412) with CLTC. Interacts with CCR2 and GRK2. Interacts with CRR5. Interacts with PTAFR (phosphorylated on serine residues). Interacts with CLTC and MAP2K3. Interacts with CREB1. Interacts with TRAF6. Interacts with IGF1R and MDM2. Interacts with C5AR1. Interacts with PDE4D. Interacts with SRC (via the SH3 domain and the protein kinase domain); the interaction is independent of the phosphorylation state of SRC C-terminus. Interacts with TACR1. Interacts with RAF1. Interacts with CHUK, IKBKB and MAP3K14. Interacts with DVL1; the interaction is enhanced by phosphorylation of DVL1. Interacts with DVL2; the interaction is enhanced by phosphorylation of DVL2. Interacts with IGF1R. Associates with MAP kinase p38. Part of a MAPK signaling complex consisting of TACR1, ARRB1, SRC, MAPK1 (activated) and MAPK3 (activated). Part of a MAPK signaling complex consisting of F2RL1, ARRB1, RAF1, MAPK1 (activated) and MAPK3 (activated). Interacts with MAP2K4/MKK4. Interacts with HCK and CXCR1 (phosphorylated). Interacts with ACKR3 and ACKR4. Interacts with ARRDC1; the interaction is direct. Interacts with GPR61, GPR62 and GPR135. Constitutively phosphorylated at Ser-412 in the cytoplasm. At the plasma membrane, is rapidly dephosphorylated, a process that is required for clathrin binding and ADRB2 endocytosis but not for ADRB2 binding and desensitization. Once internalized, is rephosphorylated. In terms of processing, the ubiquitination status appears to regulate the formation and trafficking of beta-arrestin-GPCR complexes and signaling. Ubiquitination appears to occur GPCR-specific. Ubiquitinated by MDM2; the ubiquitination is required for rapid internalization of ADRB2. Deubiquitinated by USP33; the deubiquitination leads to a dissociation of the beta-arrestin-GPCR complex. Stimulation of a class A GPCR, such as ADRB2, induces transient ubiquitination and subsequently promotes association with USP33.

Its subcellular location is the cytoplasm. The protein resides in the nucleus. The protein localises to the cell membrane. It is found in the membrane. It localises to the clathrin-coated pit. Its subcellular location is the cell projection. The protein resides in the pseudopodium. The protein localises to the cytoplasmic vesicle. In terms of biological role, functions in regulating agonist-mediated G-protein coupled receptor (GPCR) signaling by mediating both receptor desensitization and resensitization processes. During homologous desensitization, beta-arrestins bind to the GPRK-phosphorylated receptor and sterically preclude its coupling to the cognate G-protein; the binding appears to require additional receptor determinants exposed only in the active receptor conformation. The beta-arrestins target many receptors for internalization by acting as endocytic adapters (CLASPs, clathrin-associated sorting proteins) and recruiting the GPRCs to the adapter protein 2 complex 2 (AP-2) in clathrin-coated pits (CCPs). However, the extent of beta-arrestin involvement appears to vary significantly depending on the receptor, agonist and cell type. Internalized arrestin-receptor complexes traffic to intracellular endosomes, where they remain uncoupled from G-proteins. Two different modes of arrestin-mediated internalization occur. Class A receptors, like ADRB2, OPRM1, ENDRA, D1AR and ADRA1B dissociate from beta-arrestin at or near the plasma membrane and undergo rapid recycling. Class B receptors, like AVPR2, AGTR1, NTSR1, TRHR and TACR1 internalize as a complex with arrestin and traffic with it to endosomal vesicles, presumably as desensitized receptors, for extended periods of time. Receptor resensitization then requires that receptor-bound arrestin is removed so that the receptor can be dephosphorylated and returned to the plasma membrane. Involved in internalization of P2RY4 and UTP-stimulated internalization of P2RY2. Involved in phosphorylation-dependent internalization of OPRD1 ands subsequent recycling. Involved in the degradation of cAMP by recruiting cAMP phosphodiesterases to ligand-activated receptors. Beta-arrestins function as multivalent adapter proteins that can switch the GPCR from a G-protein signaling mode that transmits short-lived signals from the plasma membrane via small molecule second messengers and ion channels to a beta-arrestin signaling mode that transmits a distinct set of signals that are initiated as the receptor internalizes and transits the intracellular compartment. Acts as a signaling scaffold for MAPK pathways such as MAPK1/3 (ERK1/2). ERK1/2 activated by the beta-arrestin scaffold is largely excluded from the nucleus and confined to cytoplasmic locations such as endocytic vesicles, also called beta-arrestin signalosomes. Recruits c-Src/SRC to ADRB2 resulting in ERK activation. GPCRs for which the beta-arrestin-mediated signaling relies on both ARRB1 and ARRB2 (codependent regulation) include ADRB2, F2RL1 and PTH1R. For some GPCRs the beta-arrestin-mediated signaling relies on either ARRB1 or ARRB2 and is inhibited by the other respective beta-arrestin form (reciprocal regulation). Inhibits ERK1/2 signaling in AGTR1- and AVPR2-mediated activation (reciprocal regulation). Is required for SP-stimulated endocytosis of NK1R and recruits c-Src/SRC to internalized NK1R resulting in ERK1/2 activation, which is required for the antiapoptotic effects of SP. Is involved in proteinase-activated F2RL1-mediated ERK activity. Acts as a signaling scaffold for the AKT1 pathway. Is involved in alpha-thrombin-stimulated AKT1 signaling. Is involved in IGF1-stimulated AKT1 signaling leading to increased protection from apoptosis. Involved in activation of the p38 MAPK signaling pathway and in actin bundle formation. Involved in F2RL1-mediated cytoskeletal rearrangement and chemotaxis. Involved in AGTR1-mediated stress fiber formation by acting together with GNAQ to activate RHOA. Appears to function as signaling scaffold involved in regulation of MIP-1-beta-stimulated CCR5-dependent chemotaxis. Involved in attenuation of NF-kappa-B-dependent transcription in response to GPCR or cytokine stimulation by interacting with and stabilizing CHUK. May serve as nuclear messenger for GPCRs. Involved in OPRD1-stimulated transcriptional regulation by translocating to CDKN1B and FOS promoter regions and recruiting EP300 resulting in acetylation of histone H4. Involved in regulation of LEF1 transcriptional activity via interaction with DVL1 and/or DVL2 Also involved in regulation of receptors other than GPCRs. Involved in Toll-like receptor and IL-1 receptor signaling through the interaction with TRAF6 which prevents TRAF6 autoubiquitination and oligomerization required for activation of NF-kappa-B and JUN. Binds phosphoinositides. Binds inositolhexakisphosphate (InsP6). Involved in IL8-mediated granule release in neutrophils. Required for atypical chemokine receptor ACKR2-induced RAC1-LIMK1-PAK1-dependent phosphorylation of cofilin (CFL1) and for the up-regulation of ACKR2 from endosomal compartment to cell membrane, increasing its efficiency in chemokine uptake and degradation. Involved in the internalization of the atypical chemokine receptor ACKR3. Negatively regulates the NOTCH signaling pathway by mediating the ubiquitination and degradation of NOTCH1 by ITCH. Participates in the recruitment of the ubiquitin-protein ligase to the receptor. This chain is Beta-arrestin-1 (ARRB1), found in Homo sapiens (Human).